The sequence spans 123 residues: Undecaprenol kinase (123 aa).

Topologically, residues 1 to 33 are cytoplasmic; sequence MDSKDHRNELNRFFKSFVHAGRGIWETARTERN. The chain crosses the membrane as a helical span at residues 34–51; that stretch reads FQFHAAAACAVLICGFLV. Over 52–57 the chain is Extracellular; that stretch reads ELSIIE. The helical transmembrane segment at 58 to 74 threads the bilayer; the sequence is WMIIFLLIGGMFSLELL. Topologically, residues 75 to 99 are cytoplasmic; the sequence is NTAIEHTVDLITDKHHPLAKAAKDA. A helical transmembrane segment spans residues 100 to 120; it reads AAGAVCVFAVISCIIGLLIFL. Residues 121–123 lie on the Extracellular side of the membrane; sequence PKL.

This sequence belongs to the bacterial diacylglycerol kinase family.

It localises to the cell membrane. The enzyme catalyses di-trans,octa-cis-undecaprenol + ATP = di-trans,octa-cis-undecaprenyl phosphate + ADP + H(+). In terms of biological role, catalyzes the phosphorylation of undecaprenol in vitro, which is probably the physiological substrate. Exhibits no detectable activity against other substrates such as monoacylglycerol, ceramide, or diacylglycerol (DAG). Appears indispensable for the maintenance of spore stability and viability in B.subtilis. This Bacillus subtilis (strain 168) protein is Undecaprenol kinase (dgkA).